The following is a 231-amino-acid chain: Transmembrane protein 225 (231 aa).

Over 1 to 13 (MMRIPNRSIQAAN) the chain is Cytoplasmic. The chain crosses the membrane as a helical span at residues 14-34 (IFFSSGAILLLIAGLIMENWV). Residues 35–71 (ELIPKVRKDKVTHSPWLGCCPPFWPEESLEAIRRMMM) lie on the Extracellular side of the membrane. Residues 72-92 (MSLNISIYLNLIIGLQFTYMI) traverse the membrane as a helical segment. At 93–99 (SQNKCVH) the chain is on the cytoplasmic side. The chain crosses the membrane as a helical span at residues 100-120 (LLIGFLSFFTGCLLFYAIIVY). Topologically, residues 121–139 (HHKLNKGQYVYFVNYKTKW) are extracellular. The chain crosses the membrane as a helical span at residues 140-160 (IVFTIYLTIALFLTCGIFSFI). Topologically, residues 161 to 231 (QCTNRCACMK…LQSRRVTWAL (71 aa)) are cytoplasmic. The RVxF signature appears at 225–229 (RRVTW).

As to quaternary structure, interacts (via RVxF motif) with PPP1CC. In terms of tissue distribution, expressed in testis, specifically in spermatocytes and round spermatids.

The protein resides in the cytoplasmic vesicle. It is found in the secretory vesicle. It localises to the acrosome membrane. In terms of biological role, probably inhibits protein phosphatase 1 (PP1) in sperm via binding to catalytic subunit PPP1CC. In Rattus norvegicus (Rat), this protein is Transmembrane protein 225 (Tmem225).